Here is a 260-residue protein sequence, read N- to C-terminus: BTB/POZ domain-containing protein KCTD21 (260 aa).

Positions 3–72 (DPITLNVGGK…LRTSHLDLPE (70 aa)) constitute a BTB domain. The stretch at 88-112 (QVQPLIEALQEKEVELSKAEKNAML) forms a coiled coil.

Homopentamer. Interacts with KCTD11; KCTD21 and KCTD11 may associate in pentameric assemblies. Interacts (via BTB domain) with CUL3; indicative for a participation in a BCR (BTB-CUL3-RBX1) E3 ubiquitin-protein ligase complex. Highly expressed in cerebellum and brain. Expression is down-regulated in medulloblastoma.

Its pathway is protein modification; protein ubiquitination. Functionally, probable substrate-specific adapter of a BCR (BTB-CUL3-RBX1) E3 ubiquitin-protein ligase complex mediating the ubiquitination and subsequent proteasomal degradation of target proteins. Promotes the ubiquitination of HDAC1. Can function as antagonist of the Hedgehog pathway by affecting the nuclear transfer of transcription factor GLI1; the function probably occurs via HDAC1 down-regulation, keeping GLI1 acetylated and inactive. Inhibits cell growth and tumorigenicity of medulloblastoma (MDB). The chain is BTB/POZ domain-containing protein KCTD21 (KCTD21) from Homo sapiens (Human).